Here is a 257-residue protein sequence, read N- to C-terminus: tRNA (guanine-N(1)-)-methyltransferase (257 aa).

Residues G112 and 136 to 141 (LGDYVL) contribute to the S-adenosyl-L-methionine site.

It belongs to the RNA methyltransferase TrmD family. In terms of assembly, homodimer.

It localises to the cytoplasm. It catalyses the reaction guanosine(37) in tRNA + S-adenosyl-L-methionine = N(1)-methylguanosine(37) in tRNA + S-adenosyl-L-homocysteine + H(+). Its function is as follows. Specifically methylates guanosine-37 in various tRNAs. This is tRNA (guanine-N(1)-)-methyltransferase from Salinispora arenicola (strain CNS-205).